The following is a 190-amino-acid chain: Threonylcarbamoyl-AMP synthase (190 aa).

Residues 7–190 (SEAVAHAVAV…ALTGELFRQG (184 aa)) enclose the YrdC-like domain.

It belongs to the SUA5 family. TsaC subfamily.

It localises to the cytoplasm. The enzyme catalyses L-threonine + hydrogencarbonate + ATP = L-threonylcarbamoyladenylate + diphosphate + H2O. Required for the formation of a threonylcarbamoyl group on adenosine at position 37 (t(6)A37) in tRNAs that read codons beginning with adenine. Catalyzes the conversion of L-threonine, HCO(3)(-)/CO(2) and ATP to give threonylcarbamoyl-AMP (TC-AMP) as the acyladenylate intermediate, with the release of diphosphate. The chain is Threonylcarbamoyl-AMP synthase from Klebsiella pneumoniae subsp. pneumoniae (strain ATCC 700721 / MGH 78578).